Here is a 411-residue protein sequence, read N- to C-terminus: MKMSEIRRNVPVNEQIQLLKRGVVDLVSEEDLKRKIEKGEPLRVKLGADPTRPDLHLGHAVILRKMRQFQDLGHKVIMLIGDFTATIGDPSGKSKTRPPLSLEEARANAESYLAQCRLILRQEPEALEIRYNSEWLEQLGYKDIIGLAAKYTVARILERDDFTKRLSAGTPISMHELLYPLTQGYDSVALHADVELGGTDQLFNNLVGRALQRDYGQEAQVVLTLPLLVGLDGTEKMSKSLDNYIGLTDEPHAMFAGLMKVPDPLLDNYFTLLTDLPRERIEELLAGHPVAAHRELAREVVRAFHPDADLDAAEARFRSVAKGGIPDNIPAVSVPASELNEQGHVSMAKLVVLAGLEPSNGAARKLIQNRGLKLGGETYSDPQGQLTREQLTEGVVIQKGKDKFARLVLEG.

The 'HIGH' region motif lies at P50 to H59. The short motif at K236–S240 is the 'KMSKS' region element. K239 contributes to the ATP binding site. One can recognise an S4 RNA-binding domain in the interval V345–L409.

The protein belongs to the class-I aminoacyl-tRNA synthetase family. TyrS type 2 subfamily. As to quaternary structure, homodimer.

The protein resides in the cytoplasm. The catalysed reaction is tRNA(Tyr) + L-tyrosine + ATP = L-tyrosyl-tRNA(Tyr) + AMP + diphosphate + H(+). Functionally, catalyzes the attachment of tyrosine to tRNA(Tyr) in a two-step reaction: tyrosine is first activated by ATP to form Tyr-AMP and then transferred to the acceptor end of tRNA(Tyr). The protein is Tyrosine--tRNA ligase of Deinococcus radiodurans (strain ATCC 13939 / DSM 20539 / JCM 16871 / CCUG 27074 / LMG 4051 / NBRC 15346 / NCIMB 9279 / VKM B-1422 / R1).